A 259-amino-acid chain; its full sequence is 4-hydroxy-tetrahydrodipicolinate reductase (259 aa).

NAD(+) contacts are provided by residues 8 to 13 (GFKGRM), 93 to 95 (GTT), and 119 to 122 (APNF). The active-site Proton donor/acceptor is the His-149. His-150 is a (S)-2,3,4,5-tetrahydrodipicolinate binding site. Lys-153 functions as the Proton donor in the catalytic mechanism. A (S)-2,3,4,5-tetrahydrodipicolinate-binding site is contributed by 159 to 160 (GT).

The protein belongs to the DapB family.

Its subcellular location is the cytoplasm. The enzyme catalyses (S)-2,3,4,5-tetrahydrodipicolinate + NAD(+) + H2O = (2S,4S)-4-hydroxy-2,3,4,5-tetrahydrodipicolinate + NADH + H(+). It carries out the reaction (S)-2,3,4,5-tetrahydrodipicolinate + NADP(+) + H2O = (2S,4S)-4-hydroxy-2,3,4,5-tetrahydrodipicolinate + NADPH + H(+). The protein operates within amino-acid biosynthesis; L-lysine biosynthesis via DAP pathway; (S)-tetrahydrodipicolinate from L-aspartate: step 4/4. Catalyzes the conversion of 4-hydroxy-tetrahydrodipicolinate (HTPA) to tetrahydrodipicolinate. This Enterococcus faecalis (strain ATCC 700802 / V583) protein is 4-hydroxy-tetrahydrodipicolinate reductase.